A 282-amino-acid polypeptide reads, in one-letter code: MTKLHKYLPQRTLSKIVGWLATREWGLLTQWAIRLFIRHYGINMQEAQYPDIGHYPSFNAFFTRYLKRELRPVVEEPRAIASPVDGIISEMGQIKGENLIQAKNHHYTITALLGEDPSRASQFLDGDFFTAYLAPKNYHRIHMPLDGRLIEMIHIPGKLFSVNPASVQTVPRLFARNERAVCLFETENGLMAVILVGAMLVGSINTVWHGTVVPTAEGIAVHNYREKNIKFKRGEEIGHFKMGSTVILLFPKNTIQWNPNCQPKGTICYGENIGTVSLIEVA.

Active-site charge relay system; for autoendoproteolytic cleavage activity residues include Asp-85, His-142, and Ser-244. Ser-244 functions as the Schiff-base intermediate with substrate; via pyruvic acid; for decarboxylase activity in the catalytic mechanism. Ser-244 carries the pyruvic acid (Ser); by autocatalysis modification.

This sequence belongs to the phosphatidylserine decarboxylase family. PSD-B subfamily. Prokaryotic type I sub-subfamily. As to quaternary structure, heterodimer of a large membrane-associated beta subunit and a small pyruvoyl-containing alpha subunit. The cofactor is pyruvate. In terms of processing, is synthesized initially as an inactive proenzyme. Formation of the active enzyme involves a self-maturation process in which the active site pyruvoyl group is generated from an internal serine residue via an autocatalytic post-translational modification. Two non-identical subunits are generated from the proenzyme in this reaction, and the pyruvate is formed at the N-terminus of the alpha chain, which is derived from the carboxyl end of the proenzyme. The autoendoproteolytic cleavage occurs by a canonical serine protease mechanism, in which the side chain hydroxyl group of the serine supplies its oxygen atom to form the C-terminus of the beta chain, while the remainder of the serine residue undergoes an oxidative deamination to produce ammonia and the pyruvoyl prosthetic group on the alpha chain. During this reaction, the Ser that is part of the protease active site of the proenzyme becomes the pyruvoyl prosthetic group, which constitutes an essential element of the active site of the mature decarboxylase.

It localises to the cell membrane. It carries out the reaction a 1,2-diacyl-sn-glycero-3-phospho-L-serine + H(+) = a 1,2-diacyl-sn-glycero-3-phosphoethanolamine + CO2. It functions in the pathway phospholipid metabolism; phosphatidylethanolamine biosynthesis; phosphatidylethanolamine from CDP-diacylglycerol: step 2/2. In terms of biological role, catalyzes the formation of phosphatidylethanolamine (PtdEtn) from phosphatidylserine (PtdSer). The sequence is that of Phosphatidylserine decarboxylase proenzyme from Coxiella burnetii (strain CbuG_Q212) (Coxiella burnetii (strain Q212)).